A 90-amino-acid chain; its full sequence is Long neurotoxin OH-34 (90 aa).

The N-terminal stretch at 1–20 (KTLLLTLVVVTILCLDLGYT) is a signal peptide. 5 cysteine pairs are disulfide-bonded: cysteine 23-cysteine 41, cysteine 34-cysteine 62, cysteine 47-cysteine 51, cysteine 66-cysteine 77, and cysteine 78-cysteine 83.

Belongs to the three-finger toxin family. Long-chain subfamily. Type II alpha-neurotoxin sub-subfamily. In terms of tissue distribution, expressed by the venom gland.

It is found in the secreted. In terms of biological role, binds with high affinity to muscular (alpha-1/CHRNA1) and neuronal (alpha-7/CHRNA7) nicotinic acetylcholine receptor (nAChR) and inhibits acetylcholine from binding to the receptor, thereby impairing neuromuscular and neuronal transmission. The chain is Long neurotoxin OH-34 from Ophiophagus hannah (King cobra).